The sequence spans 402 residues: Iripin-8 (402 aa).

The first 16 residues, methionine 1–alanine 16, serve as a signal peptide directing secretion. Asparagine 164 and asparagine 230 each carry an N-linked (GlcNAc...) asparagine glycan.

This sequence belongs to the serpin family. Interacts with host thrombin/F2. Interacts with host coagulation factor VII/F7 (activated). Interacts with host coagulation factor X/F10 (activated). Interacts with host coagulation factor XII/F12 (activated). Interacts with host coagulation factor IX/F9 (activated). Interacts with host plasmin/PLG. Interacts with host protein C/PROC (activated). Saliva (at protein level). Salivary gland. Midgut. Low-level expression in ovary.

The protein localises to the secreted. Its function is as follows. Serine protease inhibitor that modulates blood feeding of ticks on vertebrate species. Inhibits the intrinsic and common pathways of blood coagulation in the host. Inhibits host thrombin, factor VIIa, factor Xa, factor XIa, factor XIIa, plasmin and activated protein C. Inhibits host trypsin and kallikrein. Reduces host complement activity. Does not affect proliferation of CD4+ T-cells and neutrophil migration. This chain is Iripin-8, found in Ixodes ricinus (Common tick).